Here is a 429-residue protein sequence, read N- to C-terminus: Carbamoyl phosphate synthase arginine-specific small chain (429 aa).

Residues 1 to 20 (MIRVIQPPLIASKQLFRRYL) constitute a mitochondrion transit peptide. Positions 218-406 (HIAVLDCGAK…FENIEQYRAT (189 aa)) constitute a Glutamine amidotransferase type-1 domain. Residue cysteine 295 is the Nucleophile of the active site. Residues histidine 379 and glutamate 381 contribute to the active site.

Belongs to the CarA family. Heterodimer composed of 2 chains; the small (or glutamine) chain promotes the hydrolysis of glutamine to ammonia, which is used by the large (or ammonia) chain to synthesize carbamoyl phosphate.

The protein localises to the mitochondrion matrix. The catalysed reaction is hydrogencarbonate + L-glutamine + 2 ATP + H2O = carbamoyl phosphate + L-glutamate + 2 ADP + phosphate + 2 H(+). The enzyme catalyses L-glutamine + H2O = L-glutamate + NH4(+). Its pathway is amino-acid biosynthesis; L-arginine biosynthesis; carbamoyl phosphate from bicarbonate: step 1/1. Functionally, small subunit of the arginine-specific carbamoyl phosphate synthase (CPSase). CPSase catalyzes the formation of carbamoyl phosphate from the ammonia moiety of glutamine, carbonate, and phosphate donated by ATP, the first step of the arginine biosynthetic pathway. The small subunit (glutamine amidotransferase) binds and cleaves glutamine to supply the large subunit with the substrate ammonia. This chain is Carbamoyl phosphate synthase arginine-specific small chain (CPA1), found in Debaryomyces hansenii (strain ATCC 36239 / CBS 767 / BCRC 21394 / JCM 1990 / NBRC 0083 / IGC 2968) (Yeast).